A 90-amino-acid polypeptide reads, in one-letter code: MTRLVFCRKYQQEMEGLDFAPFPGAKGQEFFDNVSKQAWQEWLQHQTTLINEKRLNVFEPEAKKFLEEQREKFFNNDASVEKAEGWKPEA.

Belongs to the Fe(2+)-trafficking protein family.

In terms of biological role, could be a mediator in iron transactions between iron acquisition and iron-requiring processes, such as synthesis and/or repair of Fe-S clusters in biosynthetic enzymes. This is Probable Fe(2+)-trafficking protein from Acinetobacter baylyi (strain ATCC 33305 / BD413 / ADP1).